The following is a 314-amino-acid chain: Acetaldehyde dehydrogenase 3 (314 aa).

The active-site Acyl-thioester intermediate is cysteine 132. NAD(+) contacts are provided by residues 163–171 and asparagine 291; that span reads SAGPGTRAN.

This sequence belongs to the acetaldehyde dehydrogenase family.

The enzyme catalyses acetaldehyde + NAD(+) + CoA = acetyl-CoA + NADH + H(+). The protein is Acetaldehyde dehydrogenase 3 of Dechloromonas aromatica (strain RCB).